The following is a 413-amino-acid chain: Peptidase T (413 aa).

His81 contacts Zn(2+). Asp83 is a catalytic residue. Residue Asp143 coordinates Zn(2+). The active-site Proton acceptor is Glu178. Zn(2+) is bound by residues Glu179, Asp201, and His383.

Belongs to the peptidase M20B family. It depends on Zn(2+) as a cofactor.

The protein resides in the cytoplasm. The catalysed reaction is Release of the N-terminal residue from a tripeptide.. Its function is as follows. Cleaves the N-terminal amino acid of tripeptides. The protein is Peptidase T of Lactococcus lactis subsp. cremoris (Streptococcus cremoris).